Consider the following 112-residue polypeptide: UPF0145 protein CD630_17110 (112 aa).

It belongs to the UPF0145 family.

The polypeptide is UPF0145 protein CD630_17110 (Clostridioides difficile (strain 630) (Peptoclostridium difficile)).